A 155-amino-acid polypeptide reads, in one-letter code: uncharacterized protein (155 aa).

A signal peptide spans M1 to A19.

This is an uncharacterized protein from Haemophilus influenzae (strain ATCC 51907 / DSM 11121 / KW20 / Rd).